Here is a 283-residue protein sequence, read N- to C-terminus: Protein ATAF2 (283 aa).

Residues 7 to 159 (LPAGFRFHPT…DWVLCRIYNK (153 aa)) form the NAC domain. A DNA-binding region spans residues 103 to 165 (LGIKKALVFY…IYNKKGTMEK (63 aa)). Positions 171–211 (EKPRTTTMAEQSSSPFDTSDSTYPTLQEDDSSSSGGHGHVV) are disordered. The span at 175-195 (TTTMAEQSSSPFDTSDSTYPT) shows a compositional bias: polar residues.

As to quaternary structure, homodimer. Interacts with AHK2. Interacts with AHL12 and AHL27. Interacts with the helicase domain of the tobamovirus (TMV) replicase. Expressed in roots, cotyledons, rosette leaves, cauline leaves and mature flowers. Expressed at low levels in stems and flower buds.

The protein resides in the nucleus. Functionally, involved in disease resistance response. May function as repressor of pathogenesis-related proteins. May function in the regulation of host basal defense responses against viral infection. Transcriptional activator involved in responses to wounding and infection with tobamovirus (TMV). Binds to the DNA sequences 5'-AAAATATCT-3' and 5'AGATTTTT-3' of CYP734A1/BAS1 and CYP72C1/SOB7 promoters, respectively. Acts as a suppressor of the brassinosteroid (BR)-inactivating enzymes CYP734A1/BAS1 and CYP72C1/SOB7, and prevents their expression in almost all tissues. Plays a central role in integrating BR homeostasis and seedling development. Regulates the spatial regulation of BR homeostasis and participates in the regulation of hypocotyl elongation and root growth by suppressing BR catabolism. Mediates connection between BR catabolism and photomorphogenesis. Binds to, and transactivates the promoter of the auxin biosynthetic gene NIT2. Stress-responsive NAC transcription factor involved in ABA-inducible leaf senescence signaling. Required for normal seed development and morphology. This is Protein ATAF2 (NAC081) from Arabidopsis thaliana (Mouse-ear cress).